We begin with the raw amino-acid sequence, 451 residues long: uncharacterized protein (451 aa).

Disordered stretches follow at residues 89 to 150 (PRLS…ISRY) and 164 to 222 (QVGE…KTFG). Residues 104–121 (QKPTISRESFVWESSASI) are compositionally biased toward polar residues. Residues 137–147 (SSTPSIEPESI) show a composition bias toward low complexity. The span at 175–222 (RAADSENERRPSEVREAPESRRRRETSETGSDKSKAPPPIKEIKKTFG) shows a compositional bias: basic and acidic residues. Residues 358-376 (LIGLMLFQTTIFIISKIIA) traverse the membrane as a helical segment. A disordered region spans residues 401-451 (RNGSSSGFASGTSSPLVFIPRTKRPSLVPSEKKMRGPSVTRDLAAEQERDA). The segment covering 403 to 414 (GSSSGFASGTSS) has biased composition (low complexity).

The protein belongs to the IIV-6 067R family.

It localises to the membrane. This is an uncharacterized protein from Invertebrate iridescent virus 3 (IIV-3).